Here is a 201-residue protein sequence, read N- to C-terminus: Recombination protein RecR (201 aa).

A C4-type zinc finger spans residues 57–72 (CADCRTFTEQEVCNIC). A Toprim domain is found at 81-176 (GQICVVESPA…EASRIAHGVP (96 aa)).

The protein belongs to the RecR family.

May play a role in DNA repair. It seems to be involved in an RecBC-independent recombinational process of DNA repair. It may act with RecF and RecO. This chain is Recombination protein RecR, found in Salmonella arizonae (strain ATCC BAA-731 / CDC346-86 / RSK2980).